Consider the following 1758-residue polypeptide: RanBP2-like and GRIP domain-containing protein 3 (1758 aa).

Ser-21 carries the post-translational modification Phosphoserine. Residues 60–93 form a TPR 1 repeat; it reads PRAHRFLGLLYELEENTEKAVECYRRSVELNPTQ. Positions 176–229 form a coiled coil; it reads RSTKRLKDAVARCHEAERNIALRSSLEWNSCVVQTLKEYLESLQCLESDKSDWR. Residues 584–617 form a TPR 2 repeat; that stretch reads QKMGSGLNSFYDQREYIGRSVHYWKKVLPLLKII. Positions 761–805 are disordered; the sequence is GPLYKNGSLRNADSEIKHSTPSPTKYSLSPSKSYKYSPKTPPRWA. The span at 779–798 shows a compositional bias: low complexity; sequence STPSPTKYSLSPSKSYKYSP. The stretch at 805–837 forms a coiled coil; that stretch reads AEDQNSLLKMIRQEVKAIKEEMQELKLNSSKSA. Positions 1037 to 1173 constitute a RanBD1 1 domain; the sequence is HFEPVVQMPE…FEECQRLLLD (137 aa). 3 disordered regions span residues 1216–1248, 1307–1335, and 1581–1622; these read VAEE…PTLE, AKLN…GQYF, and NNSE…KNLS. Positions 1236 to 1245 are enriched in polar residues; that stretch reads IKPNAENTGP. Residues 1318-1330 show a composition bias toward acidic residues; sequence TDEESDVTQEEER. The RanBD1 2 domain occupies 1334-1470; it reads YFEPVVPLPD…FDEAKTAQEK (137 aa). Positions 1581-1594 are enriched in polar residues; sequence NNSETSSVAQSGSE. Basic and acidic residues predominate over residues 1595-1618; that stretch reads SKVEPKKCELSKNSDIEQSSDSKV. The 51-residue stretch at 1703–1753 folds into the GRIP domain; it reads QEVSAANVEHLKNVLLQFIFLKPGSERERLLPVINTMLQLSLEEKGKLAAV.

The sequence is that of RanBP2-like and GRIP domain-containing protein 3 (RGPD3) from Homo sapiens (Human).